Consider the following 333-residue polypeptide: Probable malate dehydrogenase 3 (333 aa).

12–18 contributes to the NAD(+) binding site; the sequence is GAAGQIA. Arg93 and Arg99 together coordinate substrate. NAD(+) is bound by residues Asn106, Gln113, and 130 to 132; that span reads VGN. Substrate-binding residues include Asn132 and Arg163. The Proton acceptor role is filled by His188.

Belongs to the LDH/MDH superfamily. MDH type 2 family. As to quaternary structure, homodimer.

The catalysed reaction is (S)-malate + NAD(+) = oxaloacetate + NADH + H(+). In terms of biological role, catalyzes the reversible oxidation of malate to oxaloacetate. The protein is Probable malate dehydrogenase 3 (mdhC) of Dictyostelium discoideum (Social amoeba).